A 412-amino-acid chain; its full sequence is Peptidase T (412 aa).

Residue His-79 coordinates Zn(2+). The active site involves Asp-81. Asp-142 is a binding site for Zn(2+). The active-site Proton acceptor is the Glu-176. Positions 177, 199, and 381 each coordinate Zn(2+).

The protein belongs to the peptidase M20B family. Requires Zn(2+) as cofactor.

Its subcellular location is the cytoplasm. The enzyme catalyses Release of the N-terminal residue from a tripeptide.. In terms of biological role, cleaves the N-terminal amino acid of tripeptides. In Exiguobacterium sp. (strain ATCC BAA-1283 / AT1b), this protein is Peptidase T.